We begin with the raw amino-acid sequence, 508 residues long: Probable cytosol aminopeptidase (508 aa).

Mn(2+) contacts are provided by Lys274 and Asp279. Lys286 is a catalytic residue. Asp297, Asp356, and Glu358 together coordinate Mn(2+). Arg360 is a catalytic residue.

The protein belongs to the peptidase M17 family. Mn(2+) is required as a cofactor.

The protein localises to the cytoplasm. It carries out the reaction Release of an N-terminal amino acid, Xaa-|-Yaa-, in which Xaa is preferably Leu, but may be other amino acids including Pro although not Arg or Lys, and Yaa may be Pro. Amino acid amides and methyl esters are also readily hydrolyzed, but rates on arylamides are exceedingly low.. The enzyme catalyses Release of an N-terminal amino acid, preferentially leucine, but not glutamic or aspartic acids.. In terms of biological role, presumably involved in the processing and regular turnover of intracellular proteins. Catalyzes the removal of unsubstituted N-terminal amino acids from various peptides. This chain is Probable cytosol aminopeptidase, found in Paraburkholderia xenovorans (strain LB400).